The following is a 434-amino-acid chain: Putative peptidase B (434 aa).

The Mn(2+) site is built by Lys198 and Asp203. The active site involves Lys210. 3 residues coordinate Mn(2+): Asp221, Asp280, and Glu282. Arg284 is an active-site residue.

The protein belongs to the peptidase M17 family. In terms of assembly, homohexamer. Mn(2+) serves as cofactor.

It localises to the cytoplasm. The catalysed reaction is Release of an N-terminal amino acid, Xaa, from a peptide or arylamide. Xaa is preferably Glu or Asp but may be other amino acids, including Leu, Met, His, Cys and Gln.. Its function is as follows. Probably plays an important role in intracellular peptide degradation. The polypeptide is Putative peptidase B (Haemophilus influenzae (strain ATCC 51907 / DSM 11121 / KW20 / Rd)).